The primary structure comprises 91 residues: Probable Fe(2+)-trafficking protein (91 aa).

This sequence belongs to the Fe(2+)-trafficking protein family.

Functionally, could be a mediator in iron transactions between iron acquisition and iron-requiring processes, such as synthesis and/or repair of Fe-S clusters in biosynthetic enzymes. The sequence is that of Probable Fe(2+)-trafficking protein from Acidobacterium capsulatum (strain ATCC 51196 / DSM 11244 / BCRC 80197 / JCM 7670 / NBRC 15755 / NCIMB 13165 / 161).